The sequence spans 388 residues: MICGANATNGTNATKEYTLLVALPLSIAVGLLILLIIFGNVLVIIAVFTSRALRAPQNLFLVSLASADILVATLVMPFSLANELMGMWTFGGVWCEIYLALDVLFCTASITHLCAISLDRYWSITQAIEYNLKRTPQRIKRIIFIVWIIAAVISCPPLITMKKSEGDICDINKEKWYIVSSCIGSFFLPCIIMVLVYIRIYQIAKKRTRAPPGDHRKNEVGKKENDPHEKLNGIQNAEPDDKDEINGVDMEESSSSDHKVSNPCSLKKKSSKGKTKLSQIKPGDGDKTEACQTTKASRWKGRQNREKRFTFVLAVVIGVFVICWFPFFFTYTFTAFCDCCVPETLFKFFFWFGYCNSSLNPIIYTIFNNDFRRSFKKILCRRDKRRVV.

Over 1–22 (MICGANATNGTNATKEYTLLVA) the chain is Extracellular. N-linked (GlcNAc...) asparagine glycans are attached at residues N6, N9, and N12. A helical transmembrane segment spans residues 23-48 (LPLSIAVGLLILLIIFGNVLVIIAVF). The Cytoplasmic segment spans residues 49–59 (TSRALRAPQNL). The chain crosses the membrane as a helical span at residues 60–85 (FLVSLASADILVATLVMPFSLANELM). Residues 86 to 95 (GMWTFGGVWC) are Extracellular-facing. A disulfide bond links C95 and C169. Residues 96-118 (EIYLALDVLFCTASITHLCAISL) traverse the membrane as a helical segment. At 119–138 (DRYWSITQAIEYNLKRTPQR) the chain is on the cytoplasmic side. Residues 139 to 162 (IKRIIFIVWIIAAVISCPPLITMK) traverse the membrane as a helical segment. Over 163-173 (KSEGDICDINK) the chain is Extracellular. The chain crosses the membrane as a helical span at residues 174 to 198 (EKWYIVSSCIGSFFLPCIIMVLVYI). Topologically, residues 199–311 (RIYQIAKKRT…RQNREKRFTF (113 aa)) are cytoplasmic. Residues 208 to 291 (TRAPPGDHRK…PGDGDKTEAC (84 aa)) are disordered. Residues 212–231 (PGDHRKNEVGKKENDPHEKL) are compositionally biased toward basic and acidic residues. The span at 266–275 (LKKKSSKGKT) shows a compositional bias: basic residues. The helical transmembrane segment at 312 to 337 (VLAVVIGVFVICWFPFFFTYTFTAFC) threads the bilayer. The Extracellular segment spans residues 338–344 (DCCVPET). Residues 345–368 (LFKFFFWFGYCNSSLNPIIYTIFN) traverse the membrane as a helical segment. The Cytoplasmic segment spans residues 369-388 (NDFRRSFKKILCRRDKRRVV). C380 is lipidated: S-palmitoyl cysteine.

This sequence belongs to the G-protein coupled receptor 1 family. Adrenergic receptor subfamily. ADRA2A sub-subfamily.

The protein resides in the cell membrane. In terms of biological role, alpha-2 adrenergic receptors mediate the catecholamine-induced inhibition of adenylate cyclase through the action of G proteins. The order of potency for this receptor is dexmedetomidine &gt; oxymetazoline = epinephrine &gt; norepinephrine. The polypeptide is Alpha-2A adrenergic receptor (Danio rerio (Zebrafish)).